A 925-amino-acid polypeptide reads, in one-letter code: Bifunctional glutamine synthetase adenylyltransferase/adenylyl-removing enzyme (925 aa).

Residues 1–426 (MTDASDLLSL…AQFDQVFADK (426 aa)) form an adenylyl removase region. The adenylyl transferase stretch occupies residues 436–925 (DQAAGCIWSG…AALWARVFGA (490 aa)).

This sequence belongs to the GlnE family. The cofactor is Mg(2+).

It carries out the reaction [glutamine synthetase]-O(4)-(5'-adenylyl)-L-tyrosine + phosphate = [glutamine synthetase]-L-tyrosine + ADP. The catalysed reaction is [glutamine synthetase]-L-tyrosine + ATP = [glutamine synthetase]-O(4)-(5'-adenylyl)-L-tyrosine + diphosphate. In terms of biological role, involved in the regulation of glutamine synthetase GlnA, a key enzyme in the process to assimilate ammonia. When cellular nitrogen levels are high, the C-terminal adenylyl transferase (AT) inactivates GlnA by covalent transfer of an adenylyl group from ATP to specific tyrosine residue of GlnA, thus reducing its activity. Conversely, when nitrogen levels are low, the N-terminal adenylyl removase (AR) activates GlnA by removing the adenylyl group by phosphorolysis, increasing its activity. The regulatory region of GlnE binds the signal transduction protein PII (GlnB) which indicates the nitrogen status of the cell. The chain is Bifunctional glutamine synthetase adenylyltransferase/adenylyl-removing enzyme from Burkholderia mallei (strain ATCC 23344).